We begin with the raw amino-acid sequence, 48 residues long: Gas vesicle protein A (48 aa).

The protein belongs to the gas vesicle GvpA family. In terms of assembly, the gas vesicle shell is 2 nm thick and consists of a single layer of this protein. It forms helical ribs nearly perpendicular to the long axis of the vesicle.

It is found in the gas vesicle shell. Gas vesicles are hollow, gas filled proteinaceous nanostructures found in some microorganisms. During planktonic growth they allow positioning of the organism at a favorable depth for light or nutrient acquisition. GvpA forms the protein shell. The protein is Gas vesicle protein A of Spirulina sp. (strain CCAP 1475/10).